The following is a 321-amino-acid chain: Fe-S cluster assembly protein DRE2 (321 aa).

The tract at residues 1 to 131 is N-terminal SAM-like domain; it reads MERMLLLSPP…KPDFGPENIV (131 aa). Residues 132–213 are linker; sequence PLKLGKRKPV…EETLLDGEDM (82 aa). Residues Cys-223, Cys-234, Cys-237, and Cys-239 each coordinate [2Fe-2S] cluster. Residues 223-239 form a fe-S binding site A region; that stretch reads CRPKAGKRRRACKDCTC. [4Fe-4S] cluster-binding residues include Cys-284, Cys-287, Cys-295, and Cys-298. 2 consecutive short sequence motifs (cx2C motif) follow at residues 284-287 and 295-298; these read CGNC and CDGC. A fe-S binding site B region spans residues 284-298; it reads CGNCALGDAFRCDGC.

Belongs to the anamorsin family. Monomer. Interacts with TAH18. Interacts with MIA40. [2Fe-2S] cluster is required as a cofactor. It depends on [4Fe-4S] cluster as a cofactor.

Its subcellular location is the cytoplasm. The protein localises to the mitochondrion intermembrane space. Its function is as follows. Component of the cytosolic iron-sulfur (Fe-S) protein assembly (CIA) machinery required for the maturation of extramitochondrial Fe-S proteins. Part of an electron transfer chain functioning in an early step of cytosolic Fe-S biogenesis, facilitating the de novo assembly of a [4Fe-4S] cluster on the scaffold complex CFD1-NBP35. Electrons are transferred to DRE2 from NADPH via the FAD- and FMN-containing protein TAH18. TAH18-DRE2 are also required for the assembly of the diferric tyrosyl radical cofactor of ribonucleotide reductase (RNR), probably by providing electrons for reduction during radical cofactor maturation in the catalytic small subunit RNR2. This chain is Fe-S cluster assembly protein DRE2, found in Coccidioides immitis (strain RS) (Valley fever fungus).